The sequence spans 660 residues: Long chain acyl-CoA synthetase 1 (660 aa).

225–236 provides a ligand contact to ATP; the sequence is IMYTSGTSGDPK. The fatty acid-binding stretch occupies residues 492–516; the sequence is DGWFHTGDIGEILPNGVLKIIDRKK.

This sequence belongs to the ATP-dependent AMP-binding enzyme family. Mg(2+) is required as a cofactor. As to expression, epidermal-specific expression along the entire stem. In cauline leaves, was expressed over the entire leaf surface, most strongly in trichomes and guard cells, but not in mesophyll cells. In flowers, the expression was detected in the stigma and filaments of the stamens, and in the carpel was expressed specifically in ovaries. In roots, was expressed in primary and lateral roots, but not in the root tips.

Its subcellular location is the endoplasmic reticulum. It carries out the reaction a long-chain fatty acid + ATP + CoA = a long-chain fatty acyl-CoA + AMP + diphosphate. It participates in lipid metabolism; fatty acid metabolism. In terms of biological role, activation of long-chain fatty acids for both synthesis of cellular lipids, and degradation via beta-oxidation. Acts in both the wax and cutin pathways. Preferentially uses palmitate, palmitoleate, linoleate and eicosenoate. Seems to have a specific activity against very long-chain fatty acid (VLCFA) class with acids longer than 24 carbons (C(24)). The protein is Long chain acyl-CoA synthetase 1 (LACS1) of Arabidopsis thaliana (Mouse-ear cress).